A 338-amino-acid polypeptide reads, in one-letter code: 1-aminocyclopropane-1-carboxylate deaminase (338 aa).

Position 51 is an N6-(pyridoxal phosphate)lysine (Lys51). The Nucleophile role is filled by Ser78.

The protein belongs to the ACC deaminase/D-cysteine desulfhydrase family. As to quaternary structure, homotrimer. Pyridoxal 5'-phosphate is required as a cofactor.

The enzyme catalyses 1-aminocyclopropane-1-carboxylate + H2O = 2-oxobutanoate + NH4(+). Catalyzes a cyclopropane ring-opening reaction, the irreversible conversion of 1-aminocyclopropane-1-carboxylate (ACC) to ammonia and alpha-ketobutyrate. Allows growth on ACC as a nitrogen source. The sequence is that of 1-aminocyclopropane-1-carboxylate deaminase from Paraburkholderia phytofirmans (strain DSM 17436 / LMG 22146 / PsJN) (Burkholderia phytofirmans).